A 657-amino-acid polypeptide reads, in one-letter code: Serine/threonine-protein kinase BUR1 (657 aa).

Residues 60-366 (YREDEKLGQG…AMSAKHHPWF (307 aa)) enclose the Protein kinase domain. Residues 66-74 (LGQGTFGEV) and lysine 89 contribute to the ATP site. The active-site Proton acceptor is aspartate 195. The residue at position 240 (threonine 240) is a Phosphothreonine; by CAK. Residue serine 400 is modified to Phosphoserine. Threonine 405 is modified (phosphothreonine). The segment at 414-657 (KGESPVVKNL…FQNSDIADLY (244 aa)) is disordered. At serine 417 the chain carries Phosphoserine. Over residues 489–501 (NNSSRNNRFSGNS) the composition is skewed to low complexity. 3 stretches are compositionally biased toward polar residues: residues 535–552 (SRYQ…SPND), 564–595 (PETN…NGSR), and 614–625 (ISPSQGQHQLTS). Over residues 627–649 (PIEKKNGSFKDERAKPDESKEFQ) the composition is skewed to basic and acidic residues. Residue serine 634 is modified to Phosphoserine.

The protein belongs to the protein kinase superfamily. CMGC Ser/Thr protein kinase family. CDC2/CDKX subfamily. In terms of assembly, belongs to the BUR kinase complex composed of SGV1/BUR1 and BUR2. Interacts with BUR2 and RBP1.

The protein resides in the nucleus. The catalysed reaction is L-seryl-[protein] + ATP = O-phospho-L-seryl-[protein] + ADP + H(+). The enzyme catalyses L-threonyl-[protein] + ATP = O-phospho-L-threonyl-[protein] + ADP + H(+). It catalyses the reaction [DNA-directed RNA polymerase] + ATP = phospho-[DNA-directed RNA polymerase] + ADP + H(+). Its function is as follows. Serine/threonine-protein kinase component of the BUR kinase complex involved in transcription regulation. This complex phosphorylates 'Ser-120' of the UBC2/RAD6 ubiquitin-conjugating enzyme (E2), leading to monoubiquitination of histone H2B, the localization of the PAF1 complex to the chromatin, and the silencing of telomeric-associated genes. Also required for histone H3 'Lys-4' trimethylation. May phosphorylate the 'Ser-5' of the RBP1 carboxy-terminal domain (CTD) repeats. Necessary for the recovery from pheromone-induced growth arrest in the cell cycle G1 phase. The kinase activity of the complex requires the presence of BUR2. This chain is Serine/threonine-protein kinase BUR1 (SGV1), found in Saccharomyces cerevisiae (strain ATCC 204508 / S288c) (Baker's yeast).